The following is a 465-amino-acid chain: Fusarisetin A cluster transcription factor fsa5 (465 aa).

Positions 13-47 (CDRCRSHKLKCTVAPENTRSGSSRCTRCIRAQVTC) form a DNA-binding region, zn(2)-C6 fungal-type. The disordered stretch occupies residues 58–88 (STNVKKADLRSGTNGQETTSMQASTIVPGSP). Residues 68–84 (SGTNGQETTSMQASTIV) are compositionally biased toward polar residues.

The protein resides in the nucleus. Functionally, transcription activator that specifically regulates the expression of the gene cluster that mediates the biosynthesis of fusarisetin A. This is Fusarisetin A cluster transcription factor fsa5 from Fusarium sp. (strain FN080326).